The sequence spans 104 residues: Probable quinol monooxygenase YgiN (104 aa).

An ABM domain is found at 2–100; sequence LTVIAEIRTR…DVLEMNIRIL (99 aa).

As to quaternary structure, homodimer.

The enzyme catalyses menadiol + 2 O2 = menadione + 2 superoxide + 2 H(+). In terms of biological role, can oxidize menadiol to menadione. The protein is Probable quinol monooxygenase YgiN (ygiN) of Escherichia coli O157:H7.